Consider the following 133-residue polypeptide: Basic phospholipase A2 beta-bungarotoxin A-AL2 chain (133 aa).

The N-terminal stretch at 1-5 is a signal peptide; sequence FLLGA. The propeptide occupies 6–13; that stretch reads ANIPPHPL. 6 cysteine pairs are disulfide-bonded: C40/C132, C42/C58, C57/C113, C64/C106, C74/C99, and C92/C104. Ca(2+)-binding residues include Y41, G43, and G45. Residue H61 is part of the active site. D62 lines the Ca(2+) pocket. The active site involves D107.

Belongs to the phospholipase A2 family. Group I subfamily. D49 sub-subfamily. Heterodimer; disulfide-linked. The A chains have phospholipase A2 activity and the B chains show homology with the basic protease inhibitors. It depends on Ca(2+) as a cofactor. As to expression, expressed by the venom gland.

The protein resides in the secreted. The catalysed reaction is a 1,2-diacyl-sn-glycero-3-phosphocholine + H2O = a 1-acyl-sn-glycero-3-phosphocholine + a fatty acid + H(+). In terms of biological role, snake venom phospholipase A2 (PLA2) that inhibits neuromuscular transmission by blocking acetylcholine release from the nerve termini. PLA2 catalyzes the calcium-dependent hydrolysis of the 2-acyl groups in 3-sn-phosphoglycerides. The polypeptide is Basic phospholipase A2 beta-bungarotoxin A-AL2 chain (Bungarus multicinctus (Many-banded krait)).